A 278-amino-acid polypeptide reads, in one-letter code: Rhomboid protease GlpG (278 aa).

A run of 6 helical transmembrane segments spans residues 95–115 (GPLT…MQIV), 143–163 (AFLH…WYLA), 170–190 (LGTG…GWGQ), 192–212 (LFSG…MGYV), 224–241 (ISLP…LVAG), and 245–267 (ILGL…LMAF). Catalysis depends on S202, which acts as the Nucleophile. Residue H255 is part of the active site.

This sequence belongs to the peptidase S54 family.

The protein resides in the cell inner membrane. The catalysed reaction is Cleaves type-1 transmembrane domains using a catalytic dyad composed of serine and histidine that are contributed by different transmembrane domains.. Functionally, rhomboid-type serine protease that catalyzes intramembrane proteolysis. The polypeptide is Rhomboid protease GlpG (Yersinia enterocolitica serotype O:8 / biotype 1B (strain NCTC 13174 / 8081)).